The chain runs to 156 residues: Small ribosomal subunit protein uS7 (156 aa).

The protein belongs to the universal ribosomal protein uS7 family. Part of the 30S ribosomal subunit. Contacts proteins S9 and S11.

In terms of biological role, one of the primary rRNA binding proteins, it binds directly to 16S rRNA where it nucleates assembly of the head domain of the 30S subunit. Is located at the subunit interface close to the decoding center, probably blocks exit of the E-site tRNA. This chain is Small ribosomal subunit protein uS7, found in Arthrobacter sp. (strain FB24).